A 439-amino-acid chain; its full sequence is Ribosomal protein uS12 methylthiotransferase RimO (439 aa).

Positions 3–118 (KKFYITTLGC…AGKILREKFP (116 aa)) constitute an MTTase N-terminal domain. 6 residues coordinate [4Fe-4S] cluster: Cys12, Cys48, Cys81, Cys157, Cys161, and Cys164. Positions 143–370 (NYSKPYAYVK…RDVHLAILEE (228 aa)) constitute a Radical SAM core domain. One can recognise a TRAM domain in the interval 373–438 (ESRIGQTYDA…EYDMNGTWIS (66 aa)).

This sequence belongs to the methylthiotransferase family. RimO subfamily. [4Fe-4S] cluster serves as cofactor.

It localises to the cytoplasm. It carries out the reaction L-aspartate(89)-[ribosomal protein uS12]-hydrogen + (sulfur carrier)-SH + AH2 + 2 S-adenosyl-L-methionine = 3-methylsulfanyl-L-aspartate(89)-[ribosomal protein uS12]-hydrogen + (sulfur carrier)-H + 5'-deoxyadenosine + L-methionine + A + S-adenosyl-L-homocysteine + 2 H(+). Its function is as follows. Catalyzes the methylthiolation of an aspartic acid residue of ribosomal protein uS12. The polypeptide is Ribosomal protein uS12 methylthiotransferase RimO (Leptospira borgpetersenii serovar Hardjo-bovis (strain JB197)).